The primary structure comprises 257 residues: Snake venom serine protease 3 (257 aa).

An N-terminal signal peptide occupies residues 1 to 18 (MVLIRVLANLLILQLSYA). Positions 19 to 24 (QKSSEL) are excised as a propeptide. The region spanning 25–248 (VIGGDECNIN…YTDWIQNIIA (224 aa)) is the Peptidase S1 domain. Cystine bridges form between C31-C163, C50-C66, C98-C255, C142-C209, C174-C188, and C199-C224. N44 carries N-linked (GlcNAc...) asparagine glycosylation. Catalysis depends on H65, which acts as the Charge relay system. The N-linked (GlcNAc...) asparagine glycan is linked to N103. The active-site Charge relay system is D110. 2 N-linked (GlcNAc...) asparagine glycosylation sites follow: N117 and N154. S203 functions as the Charge relay system in the catalytic mechanism. Residue N250 is glycosylated (N-linked (GlcNAc...) asparagine).

This sequence belongs to the peptidase S1 family. Snake venom subfamily. Monomer. In terms of tissue distribution, expressed by the venom gland.

Its subcellular location is the secreted. Snake venom serine protease that may act in the hemostasis system of the prey. The protein is Snake venom serine protease 3 (TLF3) of Protobothrops flavoviridis (Habu).